We begin with the raw amino-acid sequence, 3078 residues long: Homeobox-like protein HDP1 (3078 aa).

Disordered regions lie at residues 1–29, 59–164, 203–306, 949–980, 1323–1390, 1415–1445, 1939–2046, 2115–2216, 2599–2637, and 2959–3019; these read MKRG…DNSN, LHNS…INDN, SKRK…NIGK, NAEI…QDEN, DEDS…KDRK, SSSN…NNKN, KVND…QDKF, TNES…QYNY, AYMN…DDNI, and QQNN…NNGP. Residues 14–29 are compositionally biased toward polar residues; it reads CPSNGMASSQRNDNSN. Over residues 59 to 84 the composition is skewed to basic and acidic residues; sequence LHNSSSRESKDMKLSEEPRHINEKCI. Low complexity-rich tracts occupy residues 85-94 and 114-127; these read NDNNKINNNN and NNNN…TKNN. 5 stretches are compositionally biased toward polar residues: residues 128 to 137, 148 to 157, 209 to 229, 237 to 252, and 949 to 960; these read IFFQTNNPDT, KQENTSSSLH, NSNN…NNIT, TSSI…NTVH, and NAEIHESNSPNH. Basic residues predominate over residues 1368-1380; sequence RKNKINRGSKGKH. Low complexity predominate over residues 1415 to 1433; the sequence is SSSNYEEGNSSSNEENNIS. The span at 1434–1445 shows a compositional bias: polar residues; it reads TDKNISNTNNKN. Positions 1939-1993 are enriched in low complexity; the sequence is KVNDSNNSNDANEGNNANYSNDSSNTNNNTSSSTNNSNNNTSCSSQNTTTSSENN. 2 stretches are compositionally biased toward basic and acidic residues: residues 2012 to 2021 and 2029 to 2046; these read KDTQKEKNNL and YEDR…QDKF. Over residues 2115-2126 the composition is skewed to polar residues; sequence TNESIKTNSDQN. Residues 2139–2160 are compositionally biased toward low complexity; the sequence is MNNDNYNSSYDNVHNDNDNNMV. Basic and acidic residues predominate over residues 2163–2177; the sequence is DSSRQDNMEKQKSGE. The span at 2192–2201 shows a compositional bias: acidic residues; that stretch reads NDNDNDDNND. Composition is skewed to low complexity over residues 2202–2216, 2602–2630, and 2959–2989; these read NDNN…QYNY, NDNN…YSYD, and QQNN…QKNN. A compositionally biased stretch (polar residues) spans 2990–3006; the sequence is LSEVQVSNINTPSSYNI. The segment at 2991–3078 is DNA-binding; that stretch reads SEVQVSNINT…GKRRKNEDNK (88 aa).

As to quaternary structure, homodimer.

The protein localises to the nucleus. It is found in the chromosome. Functionally, transcriptional regulator which binds to the DNA motifs 5'-GTGCACAC-3' (motif A) and 5'-[GTA]TGTA[CT][GA]TAC-3' (motif B) of genes essential for early gametocyte development, including those critical for the expansion of the inner membrane complex (IMC). The chain is Homeobox-like protein HDP1 from Plasmodium falciparum (isolate NF54).